The following is a 36-amino-acid chain: Potassium channel toxin alpha-KTx 16.1 (36 aa).

Disulfide bonds link Cys7/Cys28, Cys13/Cys33, and Cys17/Cys35.

It belongs to the short scorpion toxin superfamily. Potassium channel inhibitor family. Alpha-KTx 16 subfamily. As to expression, expressed by the venom gland.

The protein resides in the secreted. Its function is as follows. Blocks calcium-activated potassium channels. This is Potassium channel toxin alpha-KTx 16.1 from Hottentotta tamulus (Eastern Indian scorpion).